Reading from the N-terminus, the 292-residue chain is 4-diphosphocytidyl-2-C-methyl-D-erythritol kinase (292 aa).

The active site involves Lys-20. ATP is bound at residue 103–113 (PMGGGIGGGSS). Residue Asp-145 is part of the active site.

This sequence belongs to the GHMP kinase family. IspE subfamily.

It catalyses the reaction 4-CDP-2-C-methyl-D-erythritol + ATP = 4-CDP-2-C-methyl-D-erythritol 2-phosphate + ADP + H(+). The protein operates within isoprenoid biosynthesis; isopentenyl diphosphate biosynthesis via DXP pathway; isopentenyl diphosphate from 1-deoxy-D-xylulose 5-phosphate: step 3/6. Its function is as follows. Catalyzes the phosphorylation of the position 2 hydroxy group of 4-diphosphocytidyl-2C-methyl-D-erythritol. The protein is 4-diphosphocytidyl-2-C-methyl-D-erythritol kinase of Cupriavidus necator (strain ATCC 17699 / DSM 428 / KCTC 22496 / NCIMB 10442 / H16 / Stanier 337) (Ralstonia eutropha).